We begin with the raw amino-acid sequence, 825 residues long: Hypoxia-inducible factor 1-alpha (825 aa).

The segment at 1–30 is disordered; the sequence is MEGAGGENEKKKMSSERRKEKSRDAARSRR. The interaction with TSGA10 stretch occupies residues 1-401; sequence MEGAGGENEK…KEPDALTLLA (401 aa). Positions 7–30 are enriched in basic and acidic residues; that stretch reads ENEKKKMSSERRKEKSRDAARSRR. Residues 17 to 70 enclose the bHLH domain; the sequence is RRKEKSRDAARSRRSKESEVFYELAHQLPLPHNVSSHLDKASVMRLTISYLRVR. Positions 21-30 are DNA-binding; that stretch reads KSRDAARSRR. The PAS 1 domain maps to 85–158; the sequence is KAQMNCFYLK…THRNGPVRKG (74 aa). The segment at 170–191 is required for heterodimer formation with ARNT; it reads RMKCTLTSRGRTMNIKSATWKV. Residues 228–298 enclose the PAS 2 domain; it reads PHPSNIEIPL…KTHHDMFTKG (71 aa). Serine 247 carries the post-translational modification Phosphoserine; by CK1. Residues 302–345 form the PAC domain; sequence TGQYRMLAKRGGYVWVETQATVIYNTKDSQPQCIVCVNYVVSGI. Residues 401–602 form an ODD region; sequence APAAGDTIIS…STVTGFQQTQ (202 aa). Position 402 is a 4-hydroxyproline (proline 402). Polar residues predominate over residues 492–516; the sequence is QIQDQPASPSDGSTRQSSPEPNSPS. Positions 492 to 520 are disordered; that stretch reads QIQDQPASPSDGSTRQSSPEPNSPSEYCF. An NTAD region spans residues 530-574; the sequence is FKLELVEKLFAEDTEAKNPFSAQDTDLDLEMLAPYIPMDDDFQLR. At lysine 531 the chain carries N6-acetyllysine; alternate. A Glycyl lysine isopeptide (Lys-Gly) (interchain with G-Cter in ubiquitin); alternate cross-link involves residue lysine 531. Residues lysine 537 and lysine 546 each participate in a glycyl lysine isopeptide (Lys-Gly) (interchain with G-Cter in ubiquitin) cross-link. Phosphoserine; by GSK3-beta is present on serine 550. Threonine 554 is subject to Phosphothreonine; by GSK3-beta. Position 563 is a 4-hydroxyproline (proline 563). Serine 575 carries the phosphoserine; by PLK3 modification. The interval 575–784 is ID; that stretch reads SFDQLSPLES…SDLACRLLGQ (210 aa). Disordered regions lie at residues 579–602 and 654–674; these read LSPL…QQTQ and AKAS…RAGK. The residue at position 588 (serine 588) is a Phosphoserine; by GSK3-beta. The span at 654–667 shows a compositional bias: polar residues; the sequence is AKASAYSGTHSRTA. Residue serine 657 is modified to Phosphoserine; by PLK3. The Nuclear localization signal signature appears at 717-721; that stretch reads RKRKM. Residues 785-825 form a CTAD region; that stretch reads SMDESGLPQLTSYDCEVNAPIQGSRNLLQGEELLRALDQVN. Cysteine 799 carries the post-translational modification S-nitrosocysteine. Asparagine 802 is modified ((3S)-3-hydroxyasparagine).

In terms of assembly, interacts with the ARNT; forms a heterodimer that binds core DNA sequence 5'-TACGTG-3' within the hypoxia response element (HRE) of target gene promoters. Interacts with COPS5; the interaction increases the transcriptional activity of HIF1A through increased stability. Interacts with EP300 (via TAZ-type 1 domains); the interaction is stimulated in response to hypoxia and inhibited by CITED2. Interacts with CREBBP (via TAZ-type 1 domains). Interacts with NCOA1, NCOA2, APEX1 and HSP90. Interacts (hydroxylated within the ODD domain) with VHLL (via beta domain); the interaction, leads to polyubiquitination and subsequent HIF1A proteasomal degradation. During hypoxia, sumoylated HIF1A also binds VHL; the interaction promotes the ubiquitination of HIF1A. Interacts with SENP1; the interaction desumoylates HIF1A resulting in stabilization and activation of transcription. Interacts (via the ODD domain) with NAA10; the interaction appears not to acetylate HIF1A nor have any affect on protein stability, during hypoxia. Interacts with RWDD3; the interaction enhances HIF1A sumoylation. Interacts with TSGA10. Interacts with HIF3A. Interacts with RORA (via the DNA binding domain); the interaction enhances HIF1A transcription under hypoxia through increasing protein stability. Interaction with PSMA7 inhibits the transactivation activity of HIF1A under both normoxic and hypoxia-mimicking conditions. Interacts with USP20. Interacts with RACK1; promotes HIF1A ubiquitination and proteasome-mediated degradation. Interacts (via N-terminus) with USP19. Interacts with SIRT2. Interacts (deacetylated form) with EGLN1. Interacts with CBFA2T3. Interacts with HSP90AA1 and HSP90AB1. Interacts with DCUN1D1; this interaction increases the interaction between VHL and DCUN1D1. Interacts with HIF1AN. Post-translationally, S-nitrosylation of Cys-799 may be responsible for increased recruitment of p300 coactivator necessary for transcriptional activity of HIF-1 complex. In terms of processing, acetylation of Lys-531 by ARD1 increases interaction with VHL and stimulates subsequent proteasomal degradation. Deacetylated by SIRT2 increases its interaction with and hydroxylation by EGLN1 thereby inactivating HIF1A activity by inducing its proteasomal degradation. Ubiquitinated; in normoxia, following hydroxylation and interaction with VHL. Lys-531 appears to be the principal site of ubiquitination. Clioquinol, the Cu/Zn-chelator, inhibits ubiquitination through preventing hydroxylation at Asn-802. Ubiquitinated by E3 ligase VHL. Deubiquitinated by UCHL1. Post-translationally, requires phosphorylation for DNA-binding. Phosphorylation at Ser-247 by CSNK1D/CK1 represses kinase activity and impairs ARNT binding. Phosphorylation by GSK3-beta and PLK3 promote degradation by the proteasome. In terms of processing, the iron and 2-oxoglutarate dependent 3-hydroxylation of asparagine is (S) stereospecific within HIF CTAD domains. Sumoylated; with SUMO1 under hypoxia. Sumoylation is enhanced through interaction with RWDD3. Both sumoylation and desumoylation seem to be involved in the regulation of its stability during hypoxia. Sumoylation can promote either its stabilization or its VHL-dependent degradation by promoting hydroxyproline-independent HIF1A-VHL complex binding, thus leading to HIF1A ubiquitination and proteasomal degradation. Desumoylation by SENP1 increases its stability amd transcriptional activity. There is a disaccord between various publications on the effect of sumoylation and desumoylation on its stability and transcriptional activity. Post-translationally, in normoxia, is hydroxylated on Pro-402 and Pro-563 in the oxygen-dependent degradation domain (ODD) by EGLN1/PHD2 and EGLN2/PHD1. EGLN3/PHD3 has also been shown to hydroxylate Pro-563. The hydroxylated prolines promote interaction with VHL, initiating rapid ubiquitination and subsequent proteasomal degradation. Deubiquitinated by USP20. Under hypoxia, proline hydroxylation is impaired and ubiquitination is attenuated, resulting in stabilization. In normoxia, is hydroxylated on Asn-802 by HIF1AN, thus abrogating interaction with CREBBP and EP300 and preventing transcriptional activation. Repressed by iron ion, via Fe(2+) prolyl hydroxylase (PHD) enzymes-mediated hydroxylation and subsequent proteasomal degradation. As to expression, expressed in the kidney, higher expression is seen in the renal medulla than in the cortex. Expressed also in the perivenous zone of the liver.

The protein resides in the cytoplasm. It is found in the nucleus. It localises to the nucleus speckle. Induced by reactive oxygen species (ROS). In terms of biological role, functions as a master transcriptional regulator of the adaptive response to hypoxia. Under hypoxic conditions, activates the transcription of over 40 genes, including erythropoietin, glucose transporters, glycolytic enzymes, vascular endothelial growth factor, HILPDA, and other genes whose protein products increase oxygen delivery or facilitate metabolic adaptation to hypoxia. Plays an essential role in embryonic vascularization, tumor angiogenesis and pathophysiology of ischemic disease. Heterodimerizes with ARNT; heterodimer binds to core DNA sequence 5'-TACGTG-3' within the hypoxia response element (HRE) of target gene promoters. Activation requires recruitment of transcriptional coactivators such as CREBBP and EP300. Activity is enhanced by interaction with NCOA1 and/or NCOA2. Interaction with redox regulatory protein APEX1 seems to activate CTAD and potentiates activation by NCOA1 and CREBBP. Involved in the axonal distribution and transport of mitochondria in neurons during hypoxia. In Rattus norvegicus (Rat), this protein is Hypoxia-inducible factor 1-alpha (Hif1a).